The chain runs to 279 residues: Acetylglutamate kinase (279 aa).

Substrate is bound by residues 64–65 (GG), Arg86, and Asn177.

Belongs to the acetylglutamate kinase family. ArgB subfamily.

It is found in the cytoplasm. It carries out the reaction N-acetyl-L-glutamate + ATP = N-acetyl-L-glutamyl 5-phosphate + ADP. It functions in the pathway amino-acid biosynthesis; L-arginine biosynthesis; N(2)-acetyl-L-ornithine from L-glutamate: step 2/4. Functionally, catalyzes the ATP-dependent phosphorylation of N-acetyl-L-glutamate. The chain is Acetylglutamate kinase from Campylobacter jejuni subsp. jejuni serotype O:23/36 (strain 81-176).